The chain runs to 510 residues: Maturase K (510 aa).

It belongs to the intron maturase 2 family. MatK subfamily.

Its subcellular location is the plastid. It is found in the chloroplast. Functionally, usually encoded in the trnK tRNA gene intron. Probably assists in splicing its own and other chloroplast group II introns. In Populus nigra (Lombardy poplar), this protein is Maturase K.